A 379-amino-acid polypeptide reads, in one-letter code: Cytochrome b (379 aa).

4 helical membrane-spanning segments follow: residues 33 to 53 (FGSL…FLAM), 77 to 98 (WLIR…FIHV), 113 to 133 (WNIG…GYVL), and 178 to 198 (FFAF…VHLL). Residues His-83 and His-97 each contribute to the heme b site. Heme b-binding residues include His-182 and His-196. His-201 serves as a coordination point for a ubiquinone. 4 consecutive transmembrane segments (helical) span residues 226–246 (TKDL…TLFF), 288–308 (LGGV…PLLN), 320–340 (ITQT…WIGG), and 347–367 (FTTI…ILIP).

The protein belongs to the cytochrome b family. In terms of assembly, the cytochrome bc1 complex contains 11 subunits: 3 respiratory subunits (MT-CYB, CYC1 and UQCRFS1), 2 core proteins (UQCRC1 and UQCRC2) and 6 low-molecular weight proteins (UQCRH/QCR6, UQCRB/QCR7, UQCRQ/QCR8, UQCR10/QCR9, UQCR11/QCR10 and a cleavage product of UQCRFS1). This cytochrome bc1 complex then forms a dimer. It depends on heme b as a cofactor.

The protein localises to the mitochondrion inner membrane. In terms of biological role, component of the ubiquinol-cytochrome c reductase complex (complex III or cytochrome b-c1 complex) that is part of the mitochondrial respiratory chain. The b-c1 complex mediates electron transfer from ubiquinol to cytochrome c. Contributes to the generation of a proton gradient across the mitochondrial membrane that is then used for ATP synthesis. The chain is Cytochrome b (MT-CYB) from Akodon azarae (Azara's grass mouse).